A 66-amino-acid polypeptide reads, in one-letter code: Large ribosomal subunit protein bL35 (66 aa).

The disordered stretch occupies residues 19-45; the sequence is SGKVVAAQSTKRHGMTKRSKRSLRTRR. Residues 28–45 are compositionally biased toward basic residues; sequence TKRHGMTKRSKRSLRTRR.

The protein belongs to the bacterial ribosomal protein bL35 family.

This is Large ribosomal subunit protein bL35 from Anaplasma phagocytophilum (strain HZ).